The chain runs to 862 residues: Protein translocase subunit SecA (862 aa).

Residues Gln-88, 106–110 (GEGKT), and Asp-506 each bind ATP. Cys-839, Cys-841, Cys-850, and His-851 together coordinate Zn(2+).

Belongs to the SecA family. In terms of assembly, monomer and homodimer. Part of the essential Sec protein translocation apparatus which comprises SecA, SecYEG and auxiliary proteins SecDF-YajC and YidC. Zn(2+) serves as cofactor.

The protein resides in the cell inner membrane. Its subcellular location is the cytoplasm. It catalyses the reaction ATP + H2O + cellular proteinSide 1 = ADP + phosphate + cellular proteinSide 2.. Part of the Sec protein translocase complex. Interacts with the SecYEG preprotein conducting channel. Has a central role in coupling the hydrolysis of ATP to the transfer of proteins into and across the cell membrane, serving as an ATP-driven molecular motor driving the stepwise translocation of polypeptide chains across the membrane. The polypeptide is Protein translocase subunit SecA (Campylobacter jejuni subsp. doylei (strain ATCC BAA-1458 / RM4099 / 269.97)).